A 118-amino-acid chain; its full sequence is Large ribosomal subunit protein bL20 (118 aa).

This sequence belongs to the bacterial ribosomal protein bL20 family.

Functionally, binds directly to 23S ribosomal RNA and is necessary for the in vitro assembly process of the 50S ribosomal subunit. It is not involved in the protein synthesizing functions of that subunit. This is Large ribosomal subunit protein bL20 from Trichormus variabilis (strain ATCC 29413 / PCC 7937) (Anabaena variabilis).